The sequence spans 331 residues: 6-phosphogluconolactonase (331 aa).

Belongs to the cycloisomerase 2 family.

The enzyme catalyses 6-phospho-D-glucono-1,5-lactone + H2O = 6-phospho-D-gluconate + H(+). Its pathway is carbohydrate degradation; pentose phosphate pathway; D-ribulose 5-phosphate from D-glucose 6-phosphate (oxidative stage): step 2/3. Functionally, catalyzes the hydrolysis of 6-phosphogluconolactone to 6-phosphogluconate. The protein is 6-phosphogluconolactonase of Salmonella paratyphi B (strain ATCC BAA-1250 / SPB7).